A 314-amino-acid polypeptide reads, in one-letter code: Phospho-N-acetylmuramoyl-pentapeptide-transferase (314 aa).

10 helical membrane-spanning segments follow: residues 4 to 24 (LIFYITLITFIFLLFLYPIFI), 52 to 72 (TMGGILFILAIFFLSLLTYFI), 77 to 97 (LFLIIGVASLLFGFIGFLDDY), 111 to 131 (IQKLLLQFLFSIVIVYLISIF), 146 to 166 (LDLKFFYPLWGIIYLTGMSNA), 169 to 189 (LTDGIDGLSGGIYVISALFTA), 191 to 211 (IAGINFNHIPLLILPVIAYLF), 219 to 239 (IFMGDTGSLALGGILGSLALY), 242 to 262 (VELFTILTCFIFISEMFSVII), and 294 to 314 (IVLIFWTINILTGIVALGGVL).

It belongs to the glycosyltransferase 4 family. MraY subfamily. The cofactor is Mg(2+).

The protein localises to the cell inner membrane. The catalysed reaction is UDP-N-acetyl-alpha-D-muramoyl-L-alanyl-gamma-D-glutamyl-meso-2,6-diaminopimeloyl-D-alanyl-D-alanine + di-trans,octa-cis-undecaprenyl phosphate = di-trans,octa-cis-undecaprenyl diphospho-N-acetyl-alpha-D-muramoyl-L-alanyl-D-glutamyl-meso-2,6-diaminopimeloyl-D-alanyl-D-alanine + UMP. Its pathway is cell wall biogenesis; peptidoglycan biosynthesis. Functionally, catalyzes the initial step of the lipid cycle reactions in the biosynthesis of the cell wall peptidoglycan: transfers peptidoglycan precursor phospho-MurNAc-pentapeptide from UDP-MurNAc-pentapeptide onto the lipid carrier undecaprenyl phosphate, yielding undecaprenyl-pyrophosphoryl-MurNAc-pentapeptide, known as lipid I. In Petrotoga mobilis (strain DSM 10674 / SJ95), this protein is Phospho-N-acetylmuramoyl-pentapeptide-transferase.